Here is a 510-residue protein sequence, read N- to C-terminus: Anaerobic nitric oxide reductase transcription regulator NorR (510 aa).

Positions 188–417 (IIGNSQGMRT…LEHVIKRAAV (230 aa)) constitute a Sigma-54 factor interaction domain. Residues 216-223 (GETGVGKE) and 279-288 (ADGGTLFLDE) each bind ATP. The H-T-H motif DNA-binding region spans 486–505 (WAATARQLELDSGNLHRLAK).

Its pathway is nitrogen metabolism; nitric oxide reduction. Required for the expression of anaerobic nitric oxide (NO) reductase, acts as a transcriptional activator for at least the norVW operon. Activation also requires sigma-54. In Vibrio vulnificus (strain CMCP6), this protein is Anaerobic nitric oxide reductase transcription regulator NorR.